Here is a 114-residue protein sequence, read N- to C-terminus: U17-barytoxin-Tl1d (114 aa).

The first 20 residues, 1–20 (MKTIIVFLSLLVLATKFGDA), serve as a signal peptide directing secretion. The propeptide occupies 21–74 (NEGVNQEQMKEVIQNEFREDFLNEMAAMSLLQQLEAIESTLLEKEADRNSRQKR). Disulfide bonds link cysteine 75/cysteine 88, cysteine 82/cysteine 93, and cysteine 87/cysteine 108.

This sequence belongs to the neurotoxin 14 (magi-1) family. 03 (ICK-30-40) subfamily. As to expression, expressed by the venom gland.

Its subcellular location is the secreted. Functionally, ion channel inhibitor. This chain is U17-barytoxin-Tl1d, found in Trittame loki (Brush-footed trapdoor spider).